A 222-amino-acid polypeptide reads, in one-letter code: Putative N-acetylmannosamine-6-phosphate 2-epimerase (222 aa).

It belongs to the NanE family.

The enzyme catalyses an N-acyl-D-glucosamine 6-phosphate = an N-acyl-D-mannosamine 6-phosphate. It participates in amino-sugar metabolism; N-acetylneuraminate degradation; D-fructose 6-phosphate from N-acetylneuraminate: step 3/5. In terms of biological role, converts N-acetylmannosamine-6-phosphate (ManNAc-6-P) to N-acetylglucosamine-6-phosphate (GlcNAc-6-P). The sequence is that of Putative N-acetylmannosamine-6-phosphate 2-epimerase from Staphylococcus saprophyticus subsp. saprophyticus (strain ATCC 15305 / DSM 20229 / NCIMB 8711 / NCTC 7292 / S-41).